Consider the following 185-residue polypeptide: MKIGVLALQGAVREHIRHIELSGYEGIAIKRVEQLDEIDGLILPGGESTTLRRLMDLYGFKEKLQQLDLPMFGTCAGLIVLAKNVENESGYLNKLDITVERNSFGRQVDSFESELDIKGIANDIEGVFIRAPHIAKVDNGVEILSKVGGKIVAVKQGQYLGVSFHPELTDDYRITKYFIEHMIKH.

Residue 46-48 (GES) coordinates L-glutamine. Cys-75 acts as the Nucleophile in catalysis. L-glutamine-binding positions include Arg-101 and 129–130 (IR). Catalysis depends on charge relay system residues His-165 and Glu-167.

Belongs to the glutaminase PdxT/SNO family. As to quaternary structure, in the presence of PdxS, forms a dodecamer of heterodimers. Only shows activity in the heterodimer.

It catalyses the reaction aldehydo-D-ribose 5-phosphate + D-glyceraldehyde 3-phosphate + L-glutamine = pyridoxal 5'-phosphate + L-glutamate + phosphate + 3 H2O + H(+). It carries out the reaction L-glutamine + H2O = L-glutamate + NH4(+). Its pathway is cofactor biosynthesis; pyridoxal 5'-phosphate biosynthesis. In terms of biological role, catalyzes the hydrolysis of glutamine to glutamate and ammonia as part of the biosynthesis of pyridoxal 5'-phosphate. The resulting ammonia molecule is channeled to the active site of PdxS. This chain is Pyridoxal 5'-phosphate synthase subunit PdxT, found in Staphylococcus epidermidis (strain ATCC 12228 / FDA PCI 1200).